The sequence spans 771 residues: MRQNSDYPSLGPFFFAGKIKLSIATESFSAMKRSRAESASGPQQPSRRQPQTSCDLCRSRKIKCDRGTPCGNCRTRGLACSIMSPSSAPSPGASSAESAGHGRLDTAILARLAALEQAVFRSTSAVGGSGNAENGAHGDATPRVPLSGLEREGRQTANFLDKAYDRCSSASTRSGYRPLDIRVAESCRDSFATGAPDPVWLMPQKDAVAMVHDFVENIYHLMPIVHIGSTVSVIDNVYPALQAGNINHVDPAQVALILGICAACAFFWDGGVPCQHRFETEGEATSASLIWKTSALYAFEEAQRRGSRSLEGAQACAILAYLTYNMDGPSTRFYRLHTCSVTACRELGIHLVDSRGCESTDSTARRELKRRLWWHVAATDWMLGLNGGPLDGTYTVHPRQARVALPRNLNDSDLAIDSEILTMPPHVPTQASCFLQVIRLAEICRMVVDSQSPDDSIADTAYNERVLASDELFKKAIESMPPPLVLTSPIPEGAPRFLCLQRASLHLGFHSRRARLLRPFLLYKDSDGRQGTTYRRSRELCVRSAQTVLEISTSLLEHSLRIRSPEPFRRQILHHPGHHSCPASPIHRLGVVVNHLFCACAILAFECSLRKNSSVHPRQQHRGAGGEDDLDGMLVHAYRLLAAAGEECTVAADLVCAMRGVFAKYRVDGDLATVDGRGGQNQIVGSSRSAMASVQTSAGGACNEQQQIGPAAWPGMRGAIPDENQPMGEGSLETGKAWDGFDKDLDDLFVANDTYCSWDQIFARLGSYCGP.

Positions 33 to 53 (RSRAESASGPQQPSRRQPQTS) are disordered. Over residues 42–51 (PQQPSRRQPQ) the composition is skewed to low complexity. A DNA-binding region (zn(2)-C6 fungal-type) is located at residues 54–80 (CDLCRSRKIKCDRGTPCGNCRTRGLAC). The segment at 125 to 150 (AVGGSGNAENGAHGDATPRVPLSGLE) is disordered.

The protein localises to the nucleus. In terms of biological role, transcription factor; part of the gene cluster that mediates the biosynthesis of the toxin tenuazonic acid (TeA), an inhibitor of protein biosynthesis on ribosomes by suppressing the release of new protein. Directly regulates the expression of the hybrid PKS-NRPS synthetase TAS1 and the subsequent production of TeA. This Pyricularia oryzae (strain 70-15 / ATCC MYA-4617 / FGSC 8958) (Rice blast fungus) protein is Transcription factor TAS2.